Here is a 339-residue protein sequence, read N- to C-terminus: NADH-quinone oxidoreductase subunit H (339 aa).

Transmembrane regions (helical) follow at residues 9-29 (IFPL…LILC), 82-102 (ILFV…WAVI), 115-135 (VGVL…IIAG), 161-181 (MGLV…SQIV), 187-207 (MPWW…ISVL), 235-255 (MGFA…SAMT), 275-295 (IPGF…FLWI), and 311-331 (GWKV…SVLI).

This sequence belongs to the complex I subunit 1 family. In terms of assembly, NDH-1 is composed of 14 different subunits. Subunits NuoA, H, J, K, L, M, N constitute the membrane sector of the complex.

Its subcellular location is the cell inner membrane. It carries out the reaction a quinone + NADH + 5 H(+)(in) = a quinol + NAD(+) + 4 H(+)(out). In terms of biological role, NDH-1 shuttles electrons from NADH, via FMN and iron-sulfur (Fe-S) centers, to quinones in the respiratory chain. The immediate electron acceptor for the enzyme in this species is believed to be ubiquinone. Couples the redox reaction to proton translocation (for every two electrons transferred, four hydrogen ions are translocated across the cytoplasmic membrane), and thus conserves the redox energy in a proton gradient. This subunit may bind ubiquinone. The chain is NADH-quinone oxidoreductase subunit H from Rickettsia bellii (strain OSU 85-389).